Reading from the N-terminus, the 136-residue chain is MVNSCCGSVCSDQGCGLENCCRPSCCQTTCCRTTCCRPSCCVSSCCRPQCCQSVCCQPTCCSPSCCQTTCCRTTCCRPSCCVSSCFRPQCCQSVYCQPTCCRPSCGQTTCCRTTCYRPSCCVSTCCRPTCSSGSCC.

20 repeat units span residues 5–9, 20–24, 25–29, 30–34, 35–39, 40–44, 45–49, 50–54, 55–59, 60–64, 65–69, 70–74, 75–79, 80–84, 90–94, 95–99, 100–104, 110–114, 120–124, and 125–129. The 20 X 5 AA repeats OF C-C-[GRQVS]-[SPT]-[VSTQ] stretch occupies residues 5-129; the sequence is CCGSVCSDQG…CCVSTCCRPT (125 aa).

The protein belongs to the KRTAP type 4 family. Interacts with hair keratins.

In terms of biological role, in the hair cortex, hair keratin intermediate filaments are embedded in an interfilamentous matrix, consisting of hair keratin-associated proteins (KRTAP), which are essential for the formation of a rigid and resistant hair shaft through their extensive disulfide bond cross-linking with abundant cysteine residues of hair keratins. The matrix proteins include the high-sulfur and high-glycine-tyrosine keratins. In Homo sapiens (Human), this protein is Keratin-associated protein 4-2 (KRTAP4-2).